A 152-amino-acid chain; its full sequence is Methylglyoxal synthase (152 aa).

One can recognise an MGS-like domain in the interval 6 to 152; sequence RKISARKSIA…YDGYLAERLA (147 aa). Substrate-binding positions include H19, K23, 45 to 48, and 65 to 66; these read TGTT and SG. The Proton donor/acceptor role is filled by D71. H98 serves as a coordination point for substrate.

It belongs to the methylglyoxal synthase family.

The enzyme catalyses dihydroxyacetone phosphate = methylglyoxal + phosphate. Its function is as follows. Catalyzes the formation of methylglyoxal from dihydroxyacetone phosphate. The polypeptide is Methylglyoxal synthase (Actinobacillus pleuropneumoniae serotype 3 (strain JL03)).